Consider the following 192-residue polypeptide: Pyridoxal 5'-phosphate synthase subunit PdxT (192 aa).

Residue 47-49 (GES) coordinates L-glutamine. Cys78 serves as the catalytic Nucleophile. Residues Arg105 and 139-140 (IR) contribute to the L-glutamine site. Catalysis depends on charge relay system residues His175 and Glu177.

This sequence belongs to the glutaminase PdxT/SNO family. In the presence of PdxS, forms a dodecamer of heterodimers. Only shows activity in the heterodimer.

It catalyses the reaction aldehydo-D-ribose 5-phosphate + D-glyceraldehyde 3-phosphate + L-glutamine = pyridoxal 5'-phosphate + L-glutamate + phosphate + 3 H2O + H(+). It carries out the reaction L-glutamine + H2O = L-glutamate + NH4(+). It functions in the pathway cofactor biosynthesis; pyridoxal 5'-phosphate biosynthesis. In terms of biological role, catalyzes the hydrolysis of glutamine to glutamate and ammonia as part of the biosynthesis of pyridoxal 5'-phosphate. The resulting ammonia molecule is channeled to the active site of PdxS. The sequence is that of Pyridoxal 5'-phosphate synthase subunit PdxT from Solibacter usitatus (strain Ellin6076).